Here is a 142-residue protein sequence, read N- to C-terminus: DNA-directed RNA polymerases I, II, and III subunit rpabc3 (142 aa).

A non-specific ssDNA binding region spans residues 16-40; the sequence is DPDGKKFDRVSRFVCYSENYEMDLQ.

It belongs to the eukaryotic RPB8 RNA polymerase subunit family. As to quaternary structure, component of the RNA polymerase I (Pol I), RNA polymerase II (Pol II) and RNA polymerase III (Pol III) complexes consisting of at least 13, 12 and 17 subunits, respectively. Directly interacts with POLR2A.

It localises to the nucleus. It is found in the nucleolus. Functionally, DNA-dependent RNA polymerase catalyzes the transcription of DNA into RNA using the four ribonucleoside triphosphates as substrates. Common component of RNA polymerases I, II and III which synthesize ribosomal RNA precursors, mRNA precursors and many functional non-coding RNAs, and small RNAs, such as 5S rRNA and tRNAs, respectively. This is DNA-directed RNA polymerases I, II, and III subunit rpabc3 (polr2h) from Dictyostelium discoideum (Social amoeba).